The sequence spans 70 residues: DNA-directed RNA polymerase subunit omega (70 aa).

The protein belongs to the RNA polymerase subunit omega family. As to quaternary structure, the RNAP catalytic core consists of 2 alpha, 1 beta, 1 beta' and 1 omega subunit. When a sigma factor is associated with the core the holoenzyme is formed, which can initiate transcription.

The catalysed reaction is RNA(n) + a ribonucleoside 5'-triphosphate = RNA(n+1) + diphosphate. In terms of biological role, promotes RNA polymerase assembly. Latches the N- and C-terminal regions of the beta' subunit thereby facilitating its interaction with the beta and alpha subunits. The chain is DNA-directed RNA polymerase subunit omega from Staphylococcus epidermidis (strain ATCC 12228 / FDA PCI 1200).